Consider the following 431-residue polypeptide: Acetylornithine aminotransferase (431 aa).

Pyridoxal 5'-phosphate contacts are provided by residues 118-119 (GA) and F157. R160 is a N(2)-acetyl-L-ornithine binding site. 251–254 (DEVQ) lines the pyridoxal 5'-phosphate pocket. K284 is subject to N6-(pyridoxal phosphate)lysine. S313 lines the N(2)-acetyl-L-ornithine pocket. T314 lines the pyridoxal 5'-phosphate pocket.

It belongs to the class-III pyridoxal-phosphate-dependent aminotransferase family. ArgD subfamily. Homodimer. The cofactor is pyridoxal 5'-phosphate.

The protein localises to the cytoplasm. It catalyses the reaction N(2)-acetyl-L-ornithine + 2-oxoglutarate = N-acetyl-L-glutamate 5-semialdehyde + L-glutamate. The protein operates within amino-acid biosynthesis; L-arginine biosynthesis; N(2)-acetyl-L-ornithine from L-glutamate: step 4/4. In Bifidobacterium longum (strain NCC 2705), this protein is Acetylornithine aminotransferase.